We begin with the raw amino-acid sequence, 349 residues long: Merozoite surface protein P38 (349 aa).

The N-terminal stretch at Met-1–Gly-21 is a signal peptide. 6-Cys domains are found at residues Gln-22–Gly-149 and Lys-153–Asn-301. 4 disulfides stabilise this stretch: Cys-77-Cys-127, Cys-157-Cys-183, Cys-197-Cys-278, and Cys-208-Cys-276. N-linked (GlcNAc...) asparagine glycans are attached at residues Asn-294, Asn-295, and Asn-301. Residue Asn-315 is the site of GPI-anchor amidated asparagine attachment. The propeptide at Ser-316–Phe-349 is removed in mature form.

The protein resides in the cell surface. Its subcellular location is the cell membrane. This is Merozoite surface protein P38 (PFS38) from Plasmodium falciparum (isolate 3D7).